Consider the following 309-residue polypeptide: D-alanine--D-alanine ligase (309 aa).

One can recognise an ATP-grasp domain in the interval 110–305; that stretch reads KLCWTGAGLP…FQELVWHILE (196 aa). 136-191 lines the ATP pocket; it reads RQALGFPVIVKPAEEGSSIGMSRAATAEELAQAWERASGYGCAVFAERWIDGVEYT. 3 residues coordinate Mg(2+): aspartate 259, glutamate 272, and asparagine 274.

Belongs to the D-alanine--D-alanine ligase family. The cofactor is Mg(2+). Mn(2+) serves as cofactor.

The protein resides in the cytoplasm. The enzyme catalyses 2 D-alanine + ATP = D-alanyl-D-alanine + ADP + phosphate + H(+). Its pathway is cell wall biogenesis; peptidoglycan biosynthesis. Functionally, cell wall formation. This Methylococcus capsulatus (strain ATCC 33009 / NCIMB 11132 / Bath) protein is D-alanine--D-alanine ligase.